Reading from the N-terminus, the 331-residue chain is Putative heat stress transcription factor A-6a (331 aa).

Positions 135-160 (RRGAGTGSTTPRAVNCGGGGGEGEVE) are disordered. Residues 156 to 238 (EGEVERLRRD…VERKKRRMLA (83 aa)) are a coiled coil. Residues 162–212 (LRRDKEALARELARLRRQQQEARAQLLDMERRVRGTERRQEQCTEFLARAL) form a hydrophobic repeat HR-A/B region. Residues 230 to 235 (ERKKRR) carry the Nuclear localization signal motif. The short motif at 246–253 (LTFEALAL) is the Nuclear export signal element. The short motif at 270-279 (DMIWYELLGE) is the AHA1 element. Positions 305–313 (AEPWEEMGE) match the AHA2 motif.

This sequence belongs to the HSF family. Class A subfamily. Homotrimer. Post-translationally, exhibits temperature-dependent phosphorylation.

The protein localises to the cytoplasm. Its subcellular location is the nucleus. Functionally, transcriptional regulator that specifically binds DNA of heat shock promoter elements (HSE). This is Putative heat stress transcription factor A-6a (HSFA6A) from Oryza sativa subsp. japonica (Rice).